We begin with the raw amino-acid sequence, 319 residues long: tRNA uridine(34) hydroxylase (319 aa).

A Rhodanese domain is found at 124 to 218 (LDEDTVILDA…YGKNEETKGE (95 aa)). Cys178 acts as the Cysteine persulfide intermediate in catalysis.

This sequence belongs to the TrhO family.

The enzyme catalyses uridine(34) in tRNA + AH2 + O2 = 5-hydroxyuridine(34) in tRNA + A + H2O. Its function is as follows. Catalyzes oxygen-dependent 5-hydroxyuridine (ho5U) modification at position 34 in tRNAs. The polypeptide is tRNA uridine(34) hydroxylase (Listeria monocytogenes serotype 4a (strain HCC23)).